We begin with the raw amino-acid sequence, 215 residues long: Pyridoxine/pyridoxamine 5'-phosphate oxidase (215 aa).

Substrate-binding positions include 9–12 and lysine 69; that span reads RRDY. Residues 64–69, 79–80, lysine 86, and glutamine 108 each bind FMN; these read RILLLK and FT. 3 residues coordinate substrate: tyrosine 126, arginine 130, and serine 134. Residues 143-144 and tryptophan 188 each bind FMN; that span reads QS. 194 to 196 is a binding site for substrate; it reads RLH. Arginine 198 serves as a coordination point for FMN.

The protein belongs to the pyridoxamine 5'-phosphate oxidase family. In terms of assembly, homodimer. FMN is required as a cofactor.

The catalysed reaction is pyridoxamine 5'-phosphate + O2 + H2O = pyridoxal 5'-phosphate + H2O2 + NH4(+). It catalyses the reaction pyridoxine 5'-phosphate + O2 = pyridoxal 5'-phosphate + H2O2. It functions in the pathway cofactor metabolism; pyridoxal 5'-phosphate salvage; pyridoxal 5'-phosphate from pyridoxamine 5'-phosphate: step 1/1. The protein operates within cofactor metabolism; pyridoxal 5'-phosphate salvage; pyridoxal 5'-phosphate from pyridoxine 5'-phosphate: step 1/1. Its function is as follows. Catalyzes the oxidation of either pyridoxine 5'-phosphate (PNP) or pyridoxamine 5'-phosphate (PMP) into pyridoxal 5'-phosphate (PLP). The sequence is that of Pyridoxine/pyridoxamine 5'-phosphate oxidase from Pseudomonas fluorescens (strain ATCC BAA-477 / NRRL B-23932 / Pf-5).